A 316-amino-acid chain; its full sequence is Acetyl-coenzyme A carboxylase carboxyl transferase subunit alpha (316 aa).

The CoA carboxyltransferase C-terminal domain maps to 39–293; that stretch reads KLEEKNAQLT…KKHLQANLTN (255 aa).

Belongs to the AccA family. In terms of assembly, acetyl-CoA carboxylase is a heterohexamer composed of biotin carboxyl carrier protein (AccB), biotin carboxylase (AccC) and two subunits each of ACCase subunit alpha (AccA) and ACCase subunit beta (AccD).

It is found in the cytoplasm. The enzyme catalyses N(6)-carboxybiotinyl-L-lysyl-[protein] + acetyl-CoA = N(6)-biotinyl-L-lysyl-[protein] + malonyl-CoA. It functions in the pathway lipid metabolism; malonyl-CoA biosynthesis; malonyl-CoA from acetyl-CoA: step 1/1. Its function is as follows. Component of the acetyl coenzyme A carboxylase (ACC) complex. First, biotin carboxylase catalyzes the carboxylation of biotin on its carrier protein (BCCP) and then the CO(2) group is transferred by the carboxyltransferase to acetyl-CoA to form malonyl-CoA. In Coxiella burnetii (strain CbuK_Q154) (Coxiella burnetii (strain Q154)), this protein is Acetyl-coenzyme A carboxylase carboxyl transferase subunit alpha.